The sequence spans 206 residues: Outer-membrane lipoprotein LolB (206 aa).

Positions 1 to 18 (MKTFKFLTALFATAILTA) are cleaved as a signal peptide. Cys19 is lipidated: N-palmitoyl cysteine. A lipid anchor (S-diacylglycerol cysteine) is attached at Cys19.

The protein belongs to the LolB family. As to quaternary structure, monomer.

The protein localises to the cell outer membrane. In terms of biological role, plays a critical role in the incorporation of lipoproteins in the outer membrane after they are released by the LolA protein. This is Outer-membrane lipoprotein LolB from Haemophilus influenzae (strain PittEE).